The sequence spans 215 residues: MVAGSPKTSKKTLPDLSYEDRIEGVVFGVDEVGRGPLAGPVMAGAVYLHREHIPEGINDSKKLTARRRHLLSDMLHNQADYATGMADVHEIDRINIRQASLLAMKRAVEALIQKIGREPDCILVDGRDIPDWPWPSLPIIKGDSLSLSIAAASIVAKVERDEIMVKASQEYPGYGWEHNMGYPTKEHREAIQRLKPTKFHRRSFSPIRQFYENVD.

An RNase H type-2 domain is found at 24 to 215; that stretch reads GVVFGVDEVG…PIRQFYENVD (192 aa). Residues aspartate 30, glutamate 31, and aspartate 125 each coordinate a divalent metal cation.

It belongs to the RNase HII family. Requires Mn(2+) as cofactor. The cofactor is Mg(2+).

The protein resides in the cytoplasm. It catalyses the reaction Endonucleolytic cleavage to 5'-phosphomonoester.. Its function is as follows. Endonuclease that specifically degrades the RNA of RNA-DNA hybrids. The polypeptide is Ribonuclease HII (Zymomonas mobilis subsp. mobilis (strain ATCC 31821 / ZM4 / CP4)).